The sequence spans 212 residues: Ribonuclease HII (212 aa).

The RNase H type-2 domain occupies glycine 18–arginine 212. Positions 24, 25, and 118 each coordinate a divalent metal cation.

The protein belongs to the RNase HII family. Requires Mn(2+) as cofactor. The cofactor is Mg(2+).

It is found in the cytoplasm. The enzyme catalyses Endonucleolytic cleavage to 5'-phosphomonoester.. Its function is as follows. Endonuclease that specifically degrades the RNA of RNA-DNA hybrids. The chain is Ribonuclease HII from Erythrobacter litoralis (strain HTCC2594).